The sequence spans 539 residues: MHSKILILDFGSQVTQLIARRVRDSGVFSEVFPYDVSDEFVRNYGAAGVILSGGPNSVIEGDESPRVPQAVFELGVPVMGICYGMQAMAEQLGGKVENGKVREFGYAEVRAHGHTALLKDISDFTTPEGHGMLKVWMSHGDKVNEMPPGFKLMASTPNCPIAGMADEERRMYAFQFHPEVTHTVQGKAIIARFVHDICGCKSDWNMPDYIAEAVEKIRQQVGSDEVILGLSGGVDSSVAAALIHRAIGDQLTCVFVDHGLLRLDEGKMVMEMFAESLGVNVIHIDAVDQFMGHLAGVSDPEAKRKIIGREFVEVFQVEAGKRKNAKWLAQGTIYPDVIESAGKGKKGHTIKSHHNVGGLPETLNLQLLEPLRELFKDEVRKLGVALGLPHDMVYRHPFPGPGLGVRILGEVKKEFADLLRRADAIFIEELRKTPFVATPGASEATDNGIPHRNWYDATSQAFAVFLPVKSVGVMGDGRTYEYVVALRAVQTQDFMTAHWAHLPHELLGNVSNRIINEVRGINRVVYDISGKPPATIEWE.

A Glutamine amidotransferase type-1 domain is found at 4-203; the sequence is KILILDFGSQ…VHDICGCKSD (200 aa). Cys-82 functions as the Nucleophile in the catalytic mechanism. Residues His-177 and Glu-179 contribute to the active site. The 192-residue stretch at 204-395 folds into the GMPS ATP-PPase domain; it reads WNMPDYIAEA…LGLPHDMVYR (192 aa). An ATP-binding site is contributed by 231–237; it reads SGGVDSS.

Homodimer.

It catalyses the reaction XMP + L-glutamine + ATP + H2O = GMP + L-glutamate + AMP + diphosphate + 2 H(+). The protein operates within purine metabolism; GMP biosynthesis; GMP from XMP (L-Gln route): step 1/1. Functionally, catalyzes the synthesis of GMP from XMP. This Janthinobacterium sp. (strain Marseille) (Minibacterium massiliensis) protein is GMP synthase [glutamine-hydrolyzing].